We begin with the raw amino-acid sequence, 354 residues long: UPF0597 protein PPA0217 (354 aa).

Belongs to the UPF0597 family.

This is UPF0597 protein PPA0217 from Cutibacterium acnes (strain DSM 16379 / KPA171202) (Propionibacterium acnes).